A 274-amino-acid polypeptide reads, in one-letter code: SWI/SNF chromatin-remodeling complex subunit snf30 (274 aa).

2 stretches are compositionally biased toward polar residues: residues 123-150 and 157-167; these read TLSY…GTMQ and PSLTRSDSVSS. A disordered region spans residues 123 to 167; sequence TLSYPPSNGDSSSYANGTDLHGNTGTMQQEEKANPSLTRSDSVSS.

In terms of assembly, component of the SWI/SNF global transcription activator complex composed of at least arp9, arp42, snf5, snf22, snf30, sbf59, sol1, ssr1, ssr2, ssr3, ssr4 and tfg3.

It localises to the cytoplasm. Its subcellular location is the nucleus. Component of the SWI/SNF complex, an ATP-dependent chromatin remodeling complex, required for the positive and negative regulation of gene expression of a large number of genes. It changes chromatin structure by altering DNA-histone contacts within a nucleosome, leading eventually to a change in nucleosome position, thus facilitating or repressing binding of gene-specific transcription factors. This is SWI/SNF chromatin-remodeling complex subunit snf30 (snf30) from Schizosaccharomyces pombe (strain 972 / ATCC 24843) (Fission yeast).